A 122-amino-acid polypeptide reads, in one-letter code: Large ribosomal subunit protein uL18 (122 aa).

The span at 1 to 22 (MDKNKKLQSKRLRRRRHVRNKL) shows a compositional bias: basic residues. The disordered stretch occupies residues 1-25 (MDKNKKLQSKRLRRRRHVRNKLRGS).

It belongs to the universal ribosomal protein uL18 family. As to quaternary structure, part of the 50S ribosomal subunit; part of the 5S rRNA/L5/L18/L25 subcomplex. Contacts the 5S and 23S rRNAs.

This is one of the proteins that bind and probably mediate the attachment of the 5S RNA into the large ribosomal subunit, where it forms part of the central protuberance. In Rhodopirellula baltica (strain DSM 10527 / NCIMB 13988 / SH1), this protein is Large ribosomal subunit protein uL18.